Here is a 429-residue protein sequence, read N- to C-terminus: Enolase (429 aa).

Gln-162 is a (2R)-2-phosphoglycerate binding site. Glu-204 acts as the Proton donor in catalysis. 3 residues coordinate Mg(2+): Asp-241, Glu-288, and Asp-315. 4 residues coordinate (2R)-2-phosphoglycerate: Lys-340, Arg-369, Ser-370, and Lys-391. Residue Lys-340 is the Proton acceptor of the active site.

The protein belongs to the enolase family. Mg(2+) is required as a cofactor.

It is found in the cytoplasm. Its subcellular location is the secreted. The protein resides in the cell surface. It carries out the reaction (2R)-2-phosphoglycerate = phosphoenolpyruvate + H2O. It functions in the pathway carbohydrate degradation; glycolysis; pyruvate from D-glyceraldehyde 3-phosphate: step 4/5. Catalyzes the reversible conversion of 2-phosphoglycerate (2-PG) into phosphoenolpyruvate (PEP). It is essential for the degradation of carbohydrates via glycolysis. This chain is Enolase, found in Christiangramia forsetii (strain DSM 17595 / CGMCC 1.15422 / KT0803) (Gramella forsetii).